The primary structure comprises 195 residues: Protein GrpE (195 aa).

Residues 1 to 24 show a composition bias toward polar residues; that stretch reads MSSKEQNTPDEQVSQESEMEQGQQ. The disordered stretch occupies residues 1 to 40; that stretch reads MSSKEQNTPDEQVSQESEMEQGQQAEAAPETVDVVDPRDE.

The protein belongs to the GrpE family. In terms of assembly, homodimer.

It is found in the cytoplasm. Participates actively in the response to hyperosmotic and heat shock by preventing the aggregation of stress-denatured proteins, in association with DnaK and GrpE. It is the nucleotide exchange factor for DnaK and may function as a thermosensor. Unfolded proteins bind initially to DnaJ; upon interaction with the DnaJ-bound protein, DnaK hydrolyzes its bound ATP, resulting in the formation of a stable complex. GrpE releases ADP from DnaK; ATP binding to DnaK triggers the release of the substrate protein, thus completing the reaction cycle. Several rounds of ATP-dependent interactions between DnaJ, DnaK and GrpE are required for fully efficient folding. The sequence is that of Protein GrpE from Sodalis glossinidius (strain morsitans).